Consider the following 351-residue polypeptide: MSNATDPQMGDDDYDLNFTGMPPTDEDYSPCRLETQSLNKYVVIVTYALVFLLSLLGNSLVMLVILYRRVGRSVTDVYLLNLAMADLLFALTLPIWAASKVNGWIFGTFLCKVVSLLKEVNFYSGILLLACISVDRYLAIVHATRTLIQKRHSVKFVCLSCWGLSVILSLPFFLFRQAYHPNNSTPVCYEVLGNDTAKWRMVLRILPHTFGFTLPLLIMLFCYGFTLHTLFKAHIGQKHRAMRVIFAVVLIFLLCWLPYNLVLLADTLMRTHLIKESCERRNDIGRALDATEILGFLHSCLNPIIYAFIGQNFRHGFLKILATHGLVSKEFLARHHVTSYTSSSVNVSSNL.

The Extracellular portion of the chain corresponds to 1 to 46; the sequence is MSNATDPQMGDDDYDLNFTGMPPTDEDYSPCRLETQSLNKYVVIVT. Residues asparagine 3 and asparagine 17 are each glycosylated (N-linked (GlcNAc...) asparagine). The chain crosses the membrane as a helical span at residues 47–67; the sequence is YALVFLLSLLGNSLVMLVILY. The Cytoplasmic segment spans residues 68 to 76; it reads RRVGRSVTD. The helical transmembrane segment at 77–97 threads the bilayer; that stretch reads VYLLNLAMADLLFALTLPIWA. Residues 98–112 lie on the Extracellular side of the membrane; sequence ASKVNGWIFGTFLCK. A disulfide bridge connects residues cysteine 111 and cysteine 188. The chain crosses the membrane as a helical span at residues 113 to 133; that stretch reads VVSLLKEVNFYSGILLLACIS. Residues 134 to 154 lie on the Cytoplasmic side of the membrane; that stretch reads VDRYLAIVHATRTLIQKRHSV. Residues 155 to 175 traverse the membrane as a helical segment; the sequence is KFVCLSCWGLSVILSLPFFLF. Residues 176 to 204 are Extracellular-facing; the sequence is RQAYHPNNSTPVCYEVLGNDTAKWRMVLR. N-linked (GlcNAc...) asparagine glycosylation is found at asparagine 182 and asparagine 194. The helical transmembrane segment at 205–225 threads the bilayer; sequence ILPHTFGFTLPLLIMLFCYGF. Residues 226-243 are Cytoplasmic-facing; that stretch reads TLHTLFKAHIGQKHRAMR. The helical transmembrane segment at 244–264 threads the bilayer; it reads VIFAVVLIFLLCWLPYNLVLL. Topologically, residues 265-289 are extracellular; it reads ADTLMRTHLIKESCERRNDIGRALD. The chain crosses the membrane as a helical span at residues 290–310; sequence ATEILGFLHSCLNPIIYAFIG. Residues 311–351 are Cytoplasmic-facing; that stretch reads QNFRHGFLKILATHGLVSKEFLARHHVTSYTSSSVNVSSNL.

The protein belongs to the G-protein coupled receptor 1 family. Interacts with IL8. Interacts with GNAI2.

It is found in the cell membrane. Receptor to interleukin-8, which is a powerful neutrophils chemotactic factor. Binding of IL-8 to the receptor causes activation of neutrophils. This response is mediated via a G-protein that activates a phosphatidylinositol-calcium second messenger system. The protein is C-X-C chemokine receptor type 1 (CXCR1) of Macaca mulatta (Rhesus macaque).